The following is a 240-amino-acid chain: Transposase for insertion sequence element IS3411 (240 aa).

An Integrase catalytic domain is found at 125-240 (VAERPDQLWV…RASMVFTKRR (116 aa)).

Its function is as follows. Involved in the transposition of the insertion sequence. The polypeptide is Transposase for insertion sequence element IS3411 (Escherichia coli).